Reading from the N-terminus, the 75-residue chain is YTLLCYKTPIPINAETCPPGENLCYTKMWCDIWCSSRGKVVELGCAATCPSKKPYEEVTCCSTDKCNPHPKQRPD.

A signal peptide spans 1 to 2 (YT). Disulfide bonds link Cys5–Cys24, Cys17–Cys45, Cys30–Cys34, Cys49–Cys60, and Cys61–Cys66.

As to quaternary structure, monomer in solution, homodimer in crystal state. In terms of tissue distribution, expressed by the venom gland.

It is found in the secreted. Its function is as follows. Binds to muscular and neuronal nicotinic acetylcholine receptor (nAChR) and inhibits acetylcholine from binding to the receptor, thereby impairing neuromuscular and neuronal transmission. Blocks muscle type nAChR. Also binds with high affinity to alpha-7/CHRNA7 nAChRs. In addition, shows a weak inhibition of neuronal alpha-3-beta-2/CHRNA3-CHRNB2 nAChR. Selectively binds to alpha-1-delta subunit interface of the mouse muscle nicotinic acetylcholine receptor, with a 10-fold higher affinity for the adult than for the fetal receptors. In vivo, when intraperitoneally injected into mice, causes flaccid paralysis and respiratory distress, followed by death within 2-4 hours. This chain is Alpha-elapitoxin-Bc2b, found in Bungarus candidus (Malayan krait).